A 360-amino-acid chain; its full sequence is MLQIRLRRDSPTETGNGARPSPTETVTVACPDHLVLADLPVAKGIGSVTPTTVIKPVGRRSRRQLGERVHFCVRCDFPIAIYGRLIPCDHAFCLECARSDSICYLCDERIQKIQTIKMMEGIFICAAPHCLRSFLKKLDFEAHVHDLHGSLLQADAEKEDGNQSDVQSTMQQSSASESTLRAPLRSQLQQSRELNRSASFAKSQSGFSQVQNYPPDSDNSRPPGFETASPKPGIRFPDYPQPMNLMQPPSLPVPMNQNPGLPQQFGFPSYPTTESGSSQQFFNGAQYEMTRTESGGSEQSSLLGYPPPSPMTNLNFQGSYPPPSWNPGMAPPHTTQQVNRGRDGQSFGWPQENRDGFGQE.

The segment covering 1 to 11 has biased composition (basic and acidic residues); sequence MLQIRLRRDSP. Residues 1-24 form a disordered region; that stretch reads MLQIRLRRDSPTETGNGARPSPTE. An RING-type zinc finger spans residues 72–107; that stretch reads CVRCDFPIAIYGRLIPCDHAFCLECARSDSICYLCD. The C2H2-type zinc finger occupies 123–148; it reads FICAAPHCLRSFLKKLDFEAHVHDLH. The segment at 156–360 is disordered; it reads AEKEDGNQSD…QENRDGFGQE (205 aa). Polar residues-rich tracts occupy residues 163–179, 186–214, and 270–283; these read QSDV…SEST, SQLQ…QNYP, and YPTT…QFFN. A compositionally biased stretch (low complexity) spans 293 to 304; the sequence is ESGGSEQSSLLG.

This sequence belongs to the Hakai family. In terms of assembly, interacts with MTB and VIR. Associates with MTA, MTB, FIP37 and VIR to form the m6A writer complex which is essential for adenosine methylation at specific mRNA sequences.

The protein localises to the nucleus speckle. It localises to the nucleus. The protein resides in the nucleoplasm. The enzyme catalyses S-ubiquitinyl-[E2 ubiquitin-conjugating enzyme]-L-cysteine + [acceptor protein]-L-lysine = [E2 ubiquitin-conjugating enzyme]-L-cysteine + N(6)-ubiquitinyl-[acceptor protein]-L-lysine.. Functionally, probable E3 ubiquitin-protein ligase which is a subunit of the N6-methyltransferase complex, a multiprotein complex that mediates N6-methyladenosine (m6A) methylation at the 5'-[AG]GAC-3' consensus sites of some mRNAs. Associates with MTA, MTB, FIP37 and VIR to form the m6A writer complex which is essential for adenosine methylation at specific mRNA sequences. N6-methyladenosine (m6A) plays a role in mRNA stability, processing, translation efficiency and editing. In Arabidopsis thaliana (Mouse-ear cress), this protein is E3 ubiquitin-protein ligase HAKAI homolog.